Reading from the N-terminus, the 276-residue chain is MSLTTLPGVCGIGLRAPHYREALDARPELGWVEVHSENFFDGGTPLAMLRRVAECWPLSLHGVGLGLGSAARPDRGHLASLRRLVDETCPAAVSEHLSFNHSPHRYVNDLLPIPYTRAALDTVAGHVSETQDALGRTILLENLSSYVEFPDNEMNEGEFLAELVRITGCGVLLDVNNLYVNRINLGTDTDAVLAALPPDAIGEIHLAGYSEREGMLVDTHSQAVHDEVWRFYREVIRRIGPRPTLIEWDLDIPPLATLQAEAAKAQAILGGADERS.

This sequence belongs to the UPF0276 family.

In Chromobacterium violaceum (strain ATCC 12472 / DSM 30191 / JCM 1249 / CCUG 213 / NBRC 12614 / NCIMB 9131 / NCTC 9757 / MK), this protein is UPF0276 protein CV_3513.